The following is a 317-amino-acid chain: COP9 signalosome complex subunit 6b (317 aa).

In terms of domain architecture, MPN spans 11-164 (FKLHPLVMLN…VTIYESEFHV (154 aa)).

The protein belongs to the peptidase M67A family. CSN6 subfamily. Component of the CSN complex, probably composed of CSN1, CSN2, CSN3, CSN4, CSN5 (CSN5A or CSN5B), CSN6 (CSN6A or CSN6B), CSN7 and CSN8. Interacts with itself. In the complex, it probably interacts directly with CSN4, CSN5A or CSN5B, and CSN7. Binds to the translation initiation factors TIF3E1.

The protein localises to the cytoplasm. It is found in the nucleus. Functionally, component of the COP9 signalosome complex (CSN), a complex involved in various cellular and developmental processes such as photomorphogenesis and auxin and jasmonate responses. The CSN complex is an essential regulator of the ubiquitin (Ubl) conjugation pathway by mediating the deneddylation of the cullin subunits of SCF-type E3 ligase complexes, leading to decrease the Ubl ligase activity of SCF. It is involved in repression of photomorphogenesis in darkness by regulating the activity of COP1-containing Ubl ligase complexes. The complex is also required for degradation of PSIAA6 by regulating the activity of the Ubl ligase SCF-TIR complex. Essential for the structural integrity of the CSN holocomplex. This Arabidopsis thaliana (Mouse-ear cress) protein is COP9 signalosome complex subunit 6b.